The chain runs to 500 residues: Probable cytosol aminopeptidase (500 aa).

The Mn(2+) site is built by lysine 268 and aspartate 273. Residue lysine 280 is part of the active site. Mn(2+) contacts are provided by aspartate 291, aspartate 350, and glutamate 352. Residue arginine 354 is part of the active site.

It belongs to the peptidase M17 family. Requires Mn(2+) as cofactor.

It localises to the cytoplasm. The enzyme catalyses Release of an N-terminal amino acid, Xaa-|-Yaa-, in which Xaa is preferably Leu, but may be other amino acids including Pro although not Arg or Lys, and Yaa may be Pro. Amino acid amides and methyl esters are also readily hydrolyzed, but rates on arylamides are exceedingly low.. It catalyses the reaction Release of an N-terminal amino acid, preferentially leucine, but not glutamic or aspartic acids.. Its function is as follows. Presumably involved in the processing and regular turnover of intracellular proteins. Catalyzes the removal of unsubstituted N-terminal amino acids from various peptides. The chain is Probable cytosol aminopeptidase from Alkaliphilus metalliredigens (strain QYMF).